Here is a 212-residue protein sequence, read N- to C-terminus: Acyl-homoserine-lactone synthase (212 aa).

The protein belongs to the autoinducer synthase family.

It carries out the reaction a fatty acyl-[ACP] + S-adenosyl-L-methionine = an N-acyl-L-homoserine lactone + S-methyl-5'-thioadenosine + holo-[ACP] + H(+). Its function is as follows. Required for the synthesis of OHHL (N-(3-oxohexanoyl)-L-homoserine lactone), an autoinducer molecule which binds to ExpR and thus acts in virulence (soft rot disease) through the activation of genes for plant tissue macerating enzymes. This chain is Acyl-homoserine-lactone synthase (expI), found in Dickeya dadantii (strain 3937) (Erwinia chrysanthemi (strain 3937)).